The chain runs to 425 residues: [Pyruvate dehydrogenase (acetyl-transferring)] kinase, mitochondrial (425 aa).

H178 is subject to Phosphohistidine; by autocatalysis. The Histidine kinase domain occupies N180–C418. ATP is bound by residues E296–R303, D336, T355–T356, and G379–L384.

It belongs to the PDK/BCKDK protein kinase family.

It is found in the mitochondrion matrix. It catalyses the reaction L-seryl-[pyruvate dehydrogenase E1 alpha subunit] + ATP = O-phospho-L-seryl-[pyruvate dehydrogenase E1 alpha subunit] + ADP + H(+). In terms of biological role, inhibits the mitochondrial pyruvate dehydrogenase complex by phosphorylation of the E1 alpha subunit, thus contributing to the regulation of glucose metabolism. The sequence is that of [Pyruvate dehydrogenase (acetyl-transferring)] kinase, mitochondrial (pkp1) from Schizosaccharomyces pombe (strain 972 / ATCC 24843) (Fission yeast).